A 382-amino-acid polypeptide reads, in one-letter code: Mannitol-1-phosphate 5-dehydrogenase (382 aa).

An NAD(+)-binding site is contributed by 3–14 (ALHFGAGNIGRG). An N6-acetyllysine modification is found at K269.

It belongs to the mannitol dehydrogenase family. In terms of assembly, monomer.

It catalyses the reaction D-mannitol 1-phosphate + NAD(+) = beta-D-fructose 6-phosphate + NADH + H(+). The sequence is that of Mannitol-1-phosphate 5-dehydrogenase from Escherichia coli O157:H7.